A 219-amino-acid chain; its full sequence is Proteasome subunit beta type-9 (219 aa).

The propeptide at 1 to 20 is removed in mature form; it reads MLRAGAPTAGSFRTEEVHTG. The active-site Nucleophile is the threonine 21. Lysine 53 and lysine 109 each carry N6-acetyllysine.

It belongs to the peptidase T1B family. The 26S proteasome consists of a 20S proteasome core and two 19S regulatory subunits. The 20S proteasome core is composed of 28 subunits that are arranged in four stacked rings, resulting in a barrel-shaped structure. The two end rings are each formed by seven alpha subunits, and the two central rings are each formed by seven beta subunits. The catalytic chamber with the active sites is on the inside of the barrel. Component of the immunoproteasome, where it displaces the equivalent housekeeping subunit PSMB6. Component of the spermatoproteasome, a form of the proteasome specifically found in testis. Post-translationally, autocleaved. The resulting N-terminal Thr residue of the mature subunit is responsible for the nucleophile proteolytic activity.

The protein resides in the cytoplasm. The protein localises to the nucleus. The enzyme catalyses Cleavage of peptide bonds with very broad specificity.. Functionally, the proteasome is a multicatalytic proteinase complex which is characterized by its ability to cleave peptides with Arg, Phe, Tyr, Leu, and Glu adjacent to the leaving group at neutral or slightly basic pH. The proteasome has an ATP-dependent proteolytic activity. This subunit is involved in antigen processing to generate class I binding peptides. The polypeptide is Proteasome subunit beta type-9 (Psmb9) (Mus spicilegus (Steppe mouse)).